A 417-amino-acid polypeptide reads, in one-letter code: Phosphoglycerate kinase, cytosolic (417 aa).

V23, D24, F25, N26, R39, S61, H62, G64, R65, R132, H168, and R169 together coordinate (2R)-3-phosphoglycerate. Residues G214 and A215 each contribute to the ADP site. G214 is a CDP binding site. AMP is bound by residues A215 and K216. Residue A215 coordinates ATP. A215 is a binding site for Mg(2+). K216 is a binding site for (2R)-3-phosphoglycerate. D219 serves as a coordination point for CDP. D219 contributes to the Mg(2+) binding site. ADP-binding residues include K220 and G238. K220 contacts AMP. Residue K220 participates in ATP binding. G238 lines the CDP pocket. AMP contacts are provided by A239 and A311. Residues A239 and A311 each coordinate ATP. Residues A311 and N335 each coordinate ADP. Positions 336 and 341 each coordinate CDP. Residues F341, E342, D374, and T375 each contribute to the ADP site. E342 serves as a coordination point for AMP. 3 residues coordinate ATP: E342, D374, and T375. D374 provides a ligand contact to Mg(2+).

The protein belongs to the phosphoglycerate kinase family. In terms of assembly, monomer. The cofactor is Mg(2+).

Its subcellular location is the cytoplasm. It carries out the reaction (2R)-3-phosphoglycerate + ATP = (2R)-3-phospho-glyceroyl phosphate + ADP. It functions in the pathway carbohydrate degradation; glycolysis; pyruvate from D-glyceraldehyde 3-phosphate: step 2/5. This chain is Phosphoglycerate kinase, cytosolic (PGKB), found in Leishmania mexicana.